A 78-amino-acid chain; its full sequence is Exodeoxyribonuclease 7 small subunit (78 aa).

Belongs to the XseB family. Heterooligomer composed of large and small subunits.

Its subcellular location is the cytoplasm. The catalysed reaction is Exonucleolytic cleavage in either 5'- to 3'- or 3'- to 5'-direction to yield nucleoside 5'-phosphates.. Its function is as follows. Bidirectionally degrades single-stranded DNA into large acid-insoluble oligonucleotides, which are then degraded further into small acid-soluble oligonucleotides. The polypeptide is Exodeoxyribonuclease 7 small subunit (Actinobacillus succinogenes (strain ATCC 55618 / DSM 22257 / CCUG 43843 / 130Z)).